The chain runs to 88 residues: Small ribosomal subunit protein uS17 (88 aa).

It belongs to the universal ribosomal protein uS17 family. Part of the 30S ribosomal subunit.

In terms of biological role, one of the primary rRNA binding proteins, it binds specifically to the 5'-end of 16S ribosomal RNA. The sequence is that of Small ribosomal subunit protein uS17 from Prochlorococcus marinus (strain SARG / CCMP1375 / SS120).